We begin with the raw amino-acid sequence, 95 residues long: Protein TusB (95 aa).

It belongs to the DsrH/TusB family. Heterohexamer, formed by a dimer of trimers. The hexameric TusBCD complex contains 2 copies each of TusB, TusC and TusD. The TusBCD complex interacts with TusE.

It is found in the cytoplasm. In terms of biological role, part of a sulfur-relay system required for 2-thiolation of 5-methylaminomethyl-2-thiouridine (mnm(5)s(2)U) at tRNA wobble positions. The sequence is that of Protein TusB from Salmonella arizonae (strain ATCC BAA-731 / CDC346-86 / RSK2980).